Reading from the N-terminus, the 197-residue chain is Holliday junction branch migration complex subunit RuvA (197 aa).

A domain I region spans residues 1–63 (MFEYLNGKLV…EDAHSLYGFV (63 aa)). Residues 64–142 (NESEKALFLR…ATGAVGISLL (79 aa)) form a domain II region. The interval 142 to 146 (LDAAP) is flexible linker. Residues 147-197 (AGNLALEEAIEALQALGYKATELKKIEKKLEQEAGLTSEEYIKSALKLMMK) form a domain III region.

This sequence belongs to the RuvA family. Homotetramer. Forms an RuvA(8)-RuvB(12)-Holliday junction (HJ) complex. HJ DNA is sandwiched between 2 RuvA tetramers; dsDNA enters through RuvA and exits via RuvB. An RuvB hexamer assembles on each DNA strand where it exits the tetramer. Each RuvB hexamer is contacted by two RuvA subunits (via domain III) on 2 adjacent RuvB subunits; this complex drives branch migration. In the full resolvosome a probable DNA-RuvA(4)-RuvB(12)-RuvC(2) complex forms which resolves the HJ.

The protein localises to the cytoplasm. The RuvA-RuvB-RuvC complex processes Holliday junction (HJ) DNA during genetic recombination and DNA repair, while the RuvA-RuvB complex plays an important role in the rescue of blocked DNA replication forks via replication fork reversal (RFR). RuvA specifically binds to HJ cruciform DNA, conferring on it an open structure. The RuvB hexamer acts as an ATP-dependent pump, pulling dsDNA into and through the RuvAB complex. HJ branch migration allows RuvC to scan DNA until it finds its consensus sequence, where it cleaves and resolves the cruciform DNA. The chain is Holliday junction branch migration complex subunit RuvA from Lactococcus lactis subsp. cremoris (strain SK11).